The following is a 675-amino-acid chain: NADH-ubiquinone oxidoreductase chain 5 (675 aa).

The next 19 membrane-spanning stretches (helical) occupy residues 3–23, 27–47, 75–95, 108–127, 132–154, 177–197, 211–231, 251–271, 284–304, 311–329, 334–354, 380–400, 413–433, 462–482, 519–539, 564–584, 593–613, 624–644, and 649–669; these read LLPLLFPLLNLFISCILGKFL, VLFVLVINMLFSAIFSFWIFY, FLFDSITSVMLVLVVFVSLLV, HIIRFLGYLSLFTFFMLMLV, FVQLFLGWEGVGLSSYLLINFWY, IYFSLLVIFFFFKSFDFGVVF, FLGFSLNRVDLIVIFLFLGAI, TPVSALIHAATMVTAGVFVLI, LFLVSLIGGLTALFAGTVGLV, VIAYSTCSQLGYMFFACGM, VGLFHLFNHGFFKALLFLGAG, YVAILVGSLSLTGFPFLTGFY, FSINSFFIYWLGVFAAFITSF, SFIFYVLAFLGFLSIFIGFIF, LIPLVFSIVGLFFSLFVYFVI, YFDLLYNNIFVFNLLSSFYLL, LIELFGPLSFVRLINKSSIIF, YIFVVLLGLMFFIKLTSSLFF, and SFFNFGLFICLLSLIIFLSFG.

It belongs to the complex I subunit 5 family.

The protein resides in the mitochondrion inner membrane. The enzyme catalyses a ubiquinone + NADH + 5 H(+)(in) = a ubiquinol + NAD(+) + 4 H(+)(out). Core subunit of the mitochondrial membrane respiratory chain NADH dehydrogenase (Complex I) that is believed to belong to the minimal assembly required for catalysis. Complex I functions in the transfer of electrons from NADH to the respiratory chain. The immediate electron acceptor for the enzyme is believed to be ubiquinone. The protein is NADH-ubiquinone oxidoreductase chain 5 (ND5) of Acanthamoeba castellanii (Amoeba).